The primary structure comprises 33 residues: Dolabellanin-B2 (33 aa).

In terms of processing, contains two disulfide bonds. Post-translationally, up to two of the methionines may be oxidized to methionine sulfoxides.

The protein resides in the secreted. In terms of biological role, has antibacterial activity against Gram-negative bacteria E.coli JM109 and DH5-alpha, H.influenza IID 983, and V.vulnificus RIMD 2219009. Has antibacterial activity against Gram-positive bacteria S.aureus IID 1677, B.subtilis RIMD 0225014 and L.monocytogenes VIU206. Possesses antifungal activity against S.cerevisiae A581A, S.pombe IFO 1628, C.albicans ATCC 36232 and TIMM-1623, and C.tropicalis TIMM-0313. The chain is Dolabellanin-B2 from Dolabella auricularia (Shoulderblade sea cat).